A 63-amino-acid polypeptide reads, in one-letter code: MSDVTVVNCPTCGKPVVWGEISPFRPFCSKRCQLIDLGEWAAEEKRIASSGDPSDSDDWSEER.

Zn(2+) is bound by residues Cys-9, Cys-12, Cys-28, and Cys-32.

This sequence belongs to the DNA gyrase inhibitor YacG family. Interacts with GyrB. The cofactor is Zn(2+).

Functionally, inhibits all the catalytic activities of DNA gyrase by preventing its interaction with DNA. Acts by binding directly to the C-terminal domain of GyrB, which probably disrupts DNA binding by the gyrase. The sequence is that of DNA gyrase inhibitor YacG from Salmonella paratyphi A (strain AKU_12601).